The following is a 391-amino-acid chain: F-box only protein 5 (391 aa).

The 48-residue stretch at 198-245 (AELFHRDFKHLLTKILRHLSAMDLINVISVSTTWRKILQKDNSAYNSY) folds into the F-box domain. The ZBR-type zinc-finger motif lies at 318–366 (CLKVCVDCSSPAKYDPYLHRATCTRESCKFDFCTLCSCKYHGSKCCQTS). 8 residues coordinate Zn(2+): C322, C325, C340, C345, C350, C353, H358, and C363. Positions 365–391 (TSKPRSYRVPSEPLPGSKKSKQNLRRL) are disordered. Basic residues predominate over residues 382-391 (KKSKQNLRRL).

In terms of assembly, part of a SCF (SKP1-cullin-F-box) protein ligase complex. Interacts with btrc. Interacts with skp1. Interacts with cdc20. Interacts with pin1; stabilizes fbxo5 by preventing its association with btrc in an isomerization-dependent pathway; this interaction is present during G2 phase and prevents fbxo5 degradation. Interacts with plk1. Proteolysed; proteolysis is induced by both cyclin B-cdk1 and cyclin A-cdk1/2 complex through probable phosphorylation. Proteolysis is inhibited by pin1 during G2.

It localises to the nucleus. The protein localises to the cytoplasm. The protein resides in the cytoskeleton. It is found in the spindle. Its subcellular location is the microtubule organizing center. It localises to the centrosome. Its pathway is protein modification; protein ubiquitination. Regulates progression through early mitosis by inhibiting the anaphase promoting complex/cyclosome (APC). Binds to the APC activators cdc20 to prevent APC activation. Can also bind directly to the APC to inhibit substrate-binding. Required to arrest unfertilized eggs at metaphase of meiosis II, by preventing their release from metaphase of meiosis II, through inhibition of APC-dependent cyclin B destruction leading to stabilization of cyclin B-cdk1 complex activity. The protein is F-box only protein 5 of Xenopus tropicalis (Western clawed frog).